The chain runs to 198 residues: Mediator of RNA polymerase II transcription subunit 22 (198 aa).

The interval 159–198 (WGSPEMTSDPSHANHEVSDHLGSQESMQRHRNGSGTSEQS) is disordered.

The protein belongs to the Mediator complex subunit 22 family. Component of the Mediator complex.

It is found in the nucleus. Component of the Mediator complex, a coactivator involved in the regulated transcription of nearly all RNA polymerase II-dependent genes. Mediator functions as a bridge to convey information from gene-specific regulatory proteins to the basal RNA polymerase II transcription machinery. Mediator is recruited to promoters by direct interactions with regulatory proteins and serves as a scaffold for the assembly of a functional preinitiation complex with RNA polymerase II and the general transcription factors. The polypeptide is Mediator of RNA polymerase II transcription subunit 22 (med22) (Danio rerio (Zebrafish)).